A 771-amino-acid polypeptide reads, in one-letter code: DnaJ homolog subfamily C member 16 (771 aa).

Positions 1–25 are cleaved as a signal peptide; sequence MELKRLSISWQFLIVLVLILQSLSA. At 26–532 the chain is on the cytoplasmic side; the sequence is LDFDPYRVLG…ESLLHSNWRE (507 aa). Residues 29-93 form the J domain; sequence DPYRVLGVSR…EKRTNYDHYG (65 aa). The region spanning 116-244 is the Thioredoxin domain; it reads FYFDESFFHF…LRQFVESLLP (129 aa). A helical; Anchor for type IV membrane protein transmembrane segment spans residues 533–553; the sequence is MMPLLSLIFSALFILFGTVIV. Topologically, residues 554-771 are extracellular; it reads QAFSDSNEER…FYIPSWPELD (218 aa). The segment at 559–590 is disordered; sequence SNEERESHPPDKEEVPEKAGKTEPSFTKESSS. Over residues 560 to 579 the composition is skewed to basic and acidic residues; the sequence is NEERESHPPDKEEVPEKAGK. Asparagine 628 carries an N-linked (GlcNAc...) asparagine glycan.

It localises to the endoplasmic reticulum membrane. Functionally, plays an important role in regulating the size of autophagosomes during the formation process. In Rattus norvegicus (Rat), this protein is DnaJ homolog subfamily C member 16 (Dnajc16).